The chain runs to 237 residues: Ribonuclease PH (237 aa).

Residues arginine 86 and 124-126 (GTR) each bind phosphate.

It belongs to the RNase PH family. As to quaternary structure, homohexameric ring arranged as a trimer of dimers.

The catalysed reaction is tRNA(n+1) + phosphate = tRNA(n) + a ribonucleoside 5'-diphosphate. Functionally, phosphorolytic 3'-5' exoribonuclease that plays an important role in tRNA 3'-end maturation. Removes nucleotide residues following the 3'-CCA terminus of tRNAs; can also add nucleotides to the ends of RNA molecules by using nucleoside diphosphates as substrates, but this may not be physiologically important. Probably plays a role in initiation of 16S rRNA degradation (leading to ribosome degradation) during starvation. This Methylobacterium nodulans (strain LMG 21967 / CNCM I-2342 / ORS 2060) protein is Ribonuclease PH.